Reading from the N-terminus, the 245-residue chain is rRNA adenine N-6-methyltransferase (245 aa).

Residues N10, L12, G37, E58, D83, and N100 each coordinate S-adenosyl-L-methionine.

Belongs to the class I-like SAM-binding methyltransferase superfamily. rRNA adenine N(6)-methyltransferase family.

It carries out the reaction adenosine(2085) in 23S rRNA + 2 S-adenosyl-L-methionine = N(6)-dimethyladenosine(2085) in 23S rRNA + 2 S-adenosyl-L-homocysteine + 2 H(+). In terms of biological role, this protein produces a dimethylation of the adenine residue at position 2085 in 23S rRNA, resulting in reduced affinity between ribosomes and macrolide-lincosamide-streptogramin B antibiotics. This chain is rRNA adenine N-6-methyltransferase (ermBC), found in Escherichia coli.